We begin with the raw amino-acid sequence, 554 residues long: Serine/threonine-protein kinase ROP18 (554 aa).

The chain crosses the membrane as a helical span at residues 17–40 (GLATLLPKTACLAGLNVALVFLLF). One can recognise a Protein kinase domain in the interval 252-531 (LVRGAPLGSG…PLQALETAAF (280 aa)). 3 residues coordinate ATP: Gly-262, Ala-264, and Lys-281. Asn-306 is a glycosylation site (N-linked (GlcNAc...) asparagine). Positions 357, 359, and 362 each coordinate ATP. An N-linked (GlcNAc...) asparagine glycan is attached at Asn-377. Residue Asp-409 is the Proton acceptor of the active site. Asp-427 lines the ATP pocket. Asp-427 contacts Mg(2+). Asn-434 is a glycosylation site (N-linked (GlcNAc...) asparagine). An intrachain disulfide couples Cys-478 to Cys-497.

Belongs to the protein kinase superfamily. Ser/Thr protein kinase family. As to quaternary structure, component of a complex at least composed of ROP18, GRA7 and ROP2. Component of a complex at least composed of ROP18 and ROP5. Interacts with GRA7 in the absence of ROP5. Interacts with mouse IRGB6 (TGTP1/TGTP2).

Its subcellular location is the parasitophorous vacuole membrane. The protein resides in the cytoplasmic vesicle. The protein localises to the secretory vesicle. It is found in the rhoptry. It catalyses the reaction L-threonyl-[protein] + ATP = O-phospho-L-threonyl-[protein] + ADP + H(+). It carries out the reaction L-seryl-[protein] + ATP = O-phospho-L-seryl-[protein] + ADP + H(+). Its activity is regulated as follows. Kinase activity is enhanced by polymorphic pseudokinase ROP5. Its function is as follows. Protein kinase. Virulence factor. Mediates parasite survival in mouse macrophages and monocytes. Reduces the accumulation of mouse IRGA6 (IIGP1) and IRGB6 (TGTP1/TGTP2), immunity-related GTPases (IRGs) that protect mice from infection by certain intracellular pathogens, on the parasitophorous vacuole and IRG-mediated killing of parasites by mouse cells; probably in connection with ROP5. In complex with GRA7, targets IRGs to prevent IRG-mediated parasite killing by mouse cells. Phosphorylates mouse IRGA6 (IIGP1); its activity toward mouse IRGA6 is promoted by GRA7 or ROP5. Phosphorylates mouse IRGB6 (TGTP1/TGTP2). Phosphorylates mouse IRGB10 (GM12250). Does not affect IFN-gamma (IFNG)-mediated parasite killing in human cells that do not possess the large variety of IRGs. This is Serine/threonine-protein kinase ROP18 from Toxoplasma gondii.